A 475-amino-acid chain; its full sequence is MNTVLAQQIANEGGVEAWMIAQQHKSLLRFLTCGSVDDGKSTLIGRLLHDTRQIYEDQLSSLHNDSKRHGTQGEKLDLALLVDGLQAEREQGITIDVAYRYFSTEKRKFIIADTPGHEQYTRNMATGASTCDLAILLIDARKGVLDQTRRHSFISTLLGIKHLIVAINKMDLVDYSEETFTRIREDYLTFAEQLPGNLDIRFVPLSALEGDNVASQSESMLWYSGPTLLEVLETVEIQRVVDAQPMRFPVQYVNRPNLDFRGYAGTLASGRVQVGQRVKVLPSGVESNVARIVTFDGDREEAFAGEAITLVLTDEIDISRGDLLLAADEVLPAVQSASVAVVWMAEQPLSPGQSYDIKIAGKKTRARVDGIRYQVDINNLTQREVENLSLNGIGLVDLTFDEPLVLDRYQQNPVTGGLIFIDRLSNVTVGAGMVHEPVSQATAAASEFSAFELELNALVRRHFPHWGARDLLGDK.

The region spanning 25–239 is the tr-type G domain; the sequence is KSLLRFLTCG…EVLETVEIQR (215 aa). A G1 region spans residues 34-41; that stretch reads GSVDDGKS. Residue 34–41 participates in GTP binding; sequence GSVDDGKS. The segment at 92 to 96 is G2; the sequence is GITID. Positions 113–116 are G3; it reads DTPG. GTP-binding positions include 113-117 and 168-171; these read DTPGH and NKMD. The tract at residues 168–171 is G4; sequence NKMD. The interval 206–208 is G5; it reads SAL.

Belongs to the TRAFAC class translation factor GTPase superfamily. Classic translation factor GTPase family. CysN/NodQ subfamily. Heterodimer composed of CysD, the smaller subunit, and CysN.

The enzyme catalyses sulfate + ATP + H(+) = adenosine 5'-phosphosulfate + diphosphate. Its pathway is sulfur metabolism; hydrogen sulfide biosynthesis; sulfite from sulfate: step 1/3. Its function is as follows. With CysD forms the ATP sulfurylase (ATPS) that catalyzes the adenylation of sulfate producing adenosine 5'-phosphosulfate (APS) and diphosphate, the first enzymatic step in sulfur assimilation pathway. APS synthesis involves the formation of a high-energy phosphoric-sulfuric acid anhydride bond driven by GTP hydrolysis by CysN coupled to ATP hydrolysis by CysD. The polypeptide is Sulfate adenylyltransferase subunit 1 (Escherichia fergusonii (strain ATCC 35469 / DSM 13698 / CCUG 18766 / IAM 14443 / JCM 21226 / LMG 7866 / NBRC 102419 / NCTC 12128 / CDC 0568-73)).